The chain runs to 111 residues: Cyanovirin-N homolog (111 aa).

This sequence belongs to the cyanovirin-N family.

In terms of biological role, mannose-binding lectin. The protein is Cyanovirin-N homolog of Neurospora crassa (strain ATCC 24698 / 74-OR23-1A / CBS 708.71 / DSM 1257 / FGSC 987).